A 462-amino-acid polypeptide reads, in one-letter code: L-seryl-tRNA(Sec) selenium transferase (462 aa).

Lysine 295 is modified (N6-(pyridoxal phosphate)lysine).

This sequence belongs to the SelA family. In terms of assembly, homodecamer; pentamer of dimers. Binds only one seryl-tRNA(Sec) per dimer. It depends on pyridoxal 5'-phosphate as a cofactor.

The protein resides in the cytoplasm. It catalyses the reaction L-seryl-tRNA(Sec) + selenophosphate + H(+) = L-selenocysteinyl-tRNA(Sec) + phosphate. Its pathway is aminoacyl-tRNA biosynthesis; selenocysteinyl-tRNA(Sec) biosynthesis; selenocysteinyl-tRNA(Sec) from L-seryl-tRNA(Sec) (bacterial route): step 1/1. Functionally, converts seryl-tRNA(Sec) to selenocysteinyl-tRNA(Sec) required for selenoprotein biosynthesis. The protein is L-seryl-tRNA(Sec) selenium transferase of Klebsiella pneumoniae subsp. pneumoniae (strain ATCC 700721 / MGH 78578).